A 209-amino-acid chain; its full sequence is Uracil phosphoribosyltransferase (209 aa).

Residues R79, R104, and 131–139 (DPMLATGGS) each bind 5-phospho-alpha-D-ribose 1-diphosphate. Residues I194 and 199–201 (GDA) contribute to the uracil site. D200 provides a ligand contact to 5-phospho-alpha-D-ribose 1-diphosphate.

It belongs to the UPRTase family. The cofactor is Mg(2+).

The enzyme catalyses UMP + diphosphate = 5-phospho-alpha-D-ribose 1-diphosphate + uracil. It functions in the pathway pyrimidine metabolism; UMP biosynthesis via salvage pathway; UMP from uracil: step 1/1. Allosterically activated by GTP. Catalyzes the conversion of uracil and 5-phospho-alpha-D-ribose 1-diphosphate (PRPP) to UMP and diphosphate. This Streptococcus pneumoniae (strain ATCC BAA-255 / R6) protein is Uracil phosphoribosyltransferase.